A 299-amino-acid chain; its full sequence is Nucleophosmin (299 aa).

A compositionally biased stretch (acidic residues) spans glutamate 125 to histidine 134. Residues glutamate 125–glutamate 247 form a disordered region. The Nuclear localization signal signature appears at proline 153–arginine 158. The segment covering glutamate 160–glutamate 187 has biased composition (acidic residues). Residues threonine 188–lysine 197 show a composition bias toward basic and acidic residues. The Nuclear localization signal signature appears at proline 189 to serine 195. 4 consecutive repeats follow at residues lysine 218 to proline 220, lysine 221 to proline 223, lysine 237 to proline 239, and lysine 240 to proline 242. The segment at lysine 218–proline 242 is 4 X 3 AA repeats of K-T-P. Over residues lysine 221–threonine 231 the composition is skewed to basic and acidic residues. Residues lysine 232–proline 242 are compositionally biased toward low complexity.

The protein belongs to the nucleoplasmin family. In terms of assembly, decamer formed by two pentameric rings associated in a head-to-head fashion. Phosphorylated.

The protein resides in the cytoplasm. It is found in the nucleus. It localises to the nucleoplasm. The protein localises to the nucleolus. Its function is as follows. Acts as a chaperonin for the core histones H3, H2B and H4. Associated with nucleolar ribonucleoprotein structures and bind single-stranded nucleic acids. It may function in the assembly and/or transport of ribosome. May stimulate endonuclease activity on apurinic/apyrimidinic (AP) double-stranded DNA. May inhibit endonuclease activity on AP single-stranded RNA. The protein is Nucleophosmin (npm1) of Xenopus laevis (African clawed frog).